A 131-amino-acid chain; its full sequence is Fumarate reductase subunit C (131 aa).

3 helical membrane passes run glutamate 30–leucine 50, isoleucine 61–leucine 81, and isoleucine 110–phenylalanine 130.

Belongs to the FrdC family. As to quaternary structure, part of an enzyme complex containing four subunits: a flavoprotein (FrdA), an iron-sulfur protein (FrdB), and two hydrophobic anchor proteins (FrdC and FrdD).

Its subcellular location is the cell inner membrane. Functionally, two distinct, membrane-bound, FAD-containing enzymes are responsible for the catalysis of fumarate and succinate interconversion; fumarate reductase is used in anaerobic growth, and succinate dehydrogenase is used in aerobic growth. Anchors the catalytic components of the fumarate reductase complex to the cell inner membrane, binds quinones. This is Fumarate reductase subunit C from Klebsiella pneumoniae subsp. pneumoniae (strain ATCC 700721 / MGH 78578).